Reading from the N-terminus, the 238-residue chain is Probable transcriptional regulatory protein IL0164 (238 aa).

The protein belongs to the TACO1 family.

It localises to the cytoplasm. The protein is Probable transcriptional regulatory protein IL0164 of Idiomarina loihiensis (strain ATCC BAA-735 / DSM 15497 / L2-TR).